The following is a 511-amino-acid chain: Chromosomal replication initiator protein DnaA (511 aa).

The segment at 1 to 87 (MSVELWQQCV…IGSKRSSAPR (87 aa)) is domain I, interacts with DnaA modulators. A domain II region spans residues 87–174 (RAAPNAPLAA…QVEGALKHTS (88 aa)). The interval 133-160 (VATHDEPSRDSFDPMAGASSQQAPARAE) is disordered. Over residues 134–144 (ATHDEPSRDSF) the composition is skewed to basic and acidic residues. Residues 175–391 (YLNRTFTFEN…GALKRVIAHS (217 aa)) are domain III, AAA+ region. Residues G219, G221, K222, and T223 each contribute to the ATP site. The interval 392 to 511 (HFMGRDITIE…YKNLLRTLTT (120 aa)) is domain IV, binds dsDNA.

Belongs to the DnaA family. Oligomerizes as a right-handed, spiral filament on DNA at oriC.

It localises to the cytoplasm. In terms of biological role, plays an essential role in the initiation and regulation of chromosomal replication. ATP-DnaA binds to the origin of replication (oriC) to initiate formation of the DNA replication initiation complex once per cell cycle. Binds the DnaA box (a 9 base pair repeat at the origin) and separates the double-stranded (ds)DNA. Forms a right-handed helical filament on oriC DNA; dsDNA binds to the exterior of the filament while single-stranded (ss)DNA is stabiized in the filament's interior. The ATP-DnaA-oriC complex binds and stabilizes one strand of the AT-rich DNA unwinding element (DUE), permitting loading of DNA polymerase. After initiation quickly degrades to an ADP-DnaA complex that is not apt for DNA replication. Binds acidic phospholipids. The chain is Chromosomal replication initiator protein DnaA from Pseudomonas syringae pv. tomato (strain ATCC BAA-871 / DC3000).